The primary structure comprises 295 residues: uncharacterized protein (295 aa).

In terms of domain architecture, Resolvase/invertase-type recombinase catalytic spans 151–290 (RTAVCARLSS…RAVAAAARAG (140 aa)). S159 acts as the O-(5'-phospho-DNA)-serine intermediate in catalysis.

This is an uncharacterized protein from Mycobacterium bovis (strain ATCC BAA-935 / AF2122/97).